The chain runs to 99 residues: Acylphosphatase-1 (99 aa).

The residue at position 2 (alanine 2) is an N-acetylalanine. Positions 9–99 (SVDYEIFGKV…LDYSDFQIVK (91 aa)) constitute an Acylphosphatase-like domain. Residues arginine 24 and asparagine 42 contribute to the active site.

It belongs to the acylphosphatase family. As to expression, organ-common type isozyme is found in many different tissues.

The enzyme catalyses an acyl phosphate + H2O = a carboxylate + phosphate + H(+). The polypeptide is Acylphosphatase-1 (ACYP1) (Homo sapiens (Human)).